The chain runs to 1034 residues: Condensin complex subunit 3 (1034 aa).

HEAT repeat units follow at residues 95 to 132 (SPVNCLFNFLLQSHGASSMAVRFRVCQLINKLLVNLPE), 139 to 176 (DLFDKIHDAMLIRLKDRVPNVRIQAVLALARLQDPSDP), 178 to 213 (CPVSNAYVHLLENDSNPEVRRAVLTCIAPSAKSLPK), 242 to 279 (LTIAQRVKLLQQGLNDRSAAVKDVIQKKLIQAWLQYSE), 281 to 317 (DVLDLLHRLDVENSPEVSLSALNALFSVSPVGELVQN), 439 to 476 (TSLISSLAELLLFVLKDDDKRIQTVAEIISELREPIVT), and 618 to 655 (DFARQHLPLLLQILQLDEVKVKNSALNAVFDMLLLFGM). Residues 663–672 (TNPDDSQCKA) are compositionally biased toward polar residues. The disordered stretch occupies residues 663–693 (TNPDDSQCKAQENADEDISEQEKPGSVDENL). HEAT repeat units follow at residues 703–740 (ATVNGILHLFSGFLDSEIAEIRTETAEGLVKLMFSGRL), 785–823 (CFAEAFLPTLQTLFNAPASSPLADVDVANVAELLVDLTR), and 878–915 (ENSTDLLPLLDCAVEDVTDKVCERAIEKVRSQLRSGRE). Basic and acidic residues predominate over residues 909 to 949 (QLRSGREEHRVSKETEPQVSKETEDRTNLQENEEGKQKDEA). The interval 909–1034 (QLRSGREEHR…LSKLLNEEAN (126 aa)) is disordered. Over residues 964-984 (RGKATKGRRKGPAAAATRRKA) the composition is skewed to basic residues. Over residues 985-999 (SKAEEAEAEMERQEE) the composition is skewed to basic and acidic residues.

Belongs to the CND3 (condensin subunit 3) family. Component of the condensin complex, which contains the XCAP-E/SMC2 and XCAP-C/SMC4 heterodimer, and three non SMC subunits that probably regulate the complex: XCAP-H/NCAPH, XCAP-D2/NCAPD2 and XCAP-G/NCAPG. In terms of processing, phosphorylated by cdk1. Its phosphorylation, as well as that of XCAP-D2 and XCAP-H subunits, activates the condensin complex and is required for chromosome condensation.

The protein resides in the nucleus. The protein localises to the cytoplasm. It is found in the chromosome. In terms of biological role, regulatory subunit of the condensin complex, a complex required for conversion of interphase chromatin into mitotic-like condense chromosomes. The condensin complex probably introduces positive supercoils into relaxed DNA in the presence of type I topoisomerases and converts nicked DNA into positive knotted forms in the presence of type II topoisomerase. The polypeptide is Condensin complex subunit 3 (ncapg) (Xenopus laevis (African clawed frog)).